We begin with the raw amino-acid sequence, 370 residues long: Homoserine kinase (370 aa).

A chloroplast-targeting transit peptide spans 1–34 (MASLCFQSPSKPISYFQPKSNPSPPLFAKVSVFR). 143-154 (LPLGSGLGSSAA) contributes to the ATP binding site.

It belongs to the GHMP kinase family. Homoserine kinase subfamily.

The protein localises to the plastid. Its subcellular location is the chloroplast stroma. It carries out the reaction L-homoserine + ATP = O-phospho-L-homoserine + ADP + H(+). Its pathway is amino-acid biosynthesis; L-threonine biosynthesis; L-threonine from L-aspartate: step 4/5. Its function is as follows. Catalyzes the ATP-dependent phosphorylation of L-homoserine to L-homoserine phosphate. Is specific for L-homoserine and cannot use other substrates such D-serine, L-serine, D-threonine and L-threonine, galactose or D-homoserine in vitro. Required for susceptibility to the downy mildew pathogen Hyaloperonospora parasitica. This is Homoserine kinase (HSK) from Arabidopsis thaliana (Mouse-ear cress).